The primary structure comprises 669 residues: DNA ligase (669 aa).

NAD(+) contacts are provided by residues 31–35 (DAEYD), 80–81 (SL), and Glu-112. Lys-114 functions as the N6-AMP-lysine intermediate in the catalytic mechanism. NAD(+) is bound by residues Arg-135, Glu-172, Lys-289, and Lys-313. Residues Cys-407, Cys-410, Cys-425, and Cys-431 each coordinate Zn(2+). The BRCT domain occupies 591 to 669 (SVPQPLADKV…EEQLIEILNN (79 aa)).

This sequence belongs to the NAD-dependent DNA ligase family. LigA subfamily. Requires Mg(2+) as cofactor. The cofactor is Mn(2+).

It carries out the reaction NAD(+) + (deoxyribonucleotide)n-3'-hydroxyl + 5'-phospho-(deoxyribonucleotide)m = (deoxyribonucleotide)n+m + AMP + beta-nicotinamide D-nucleotide.. DNA ligase that catalyzes the formation of phosphodiester linkages between 5'-phosphoryl and 3'-hydroxyl groups in double-stranded DNA using NAD as a coenzyme and as the energy source for the reaction. It is essential for DNA replication and repair of damaged DNA. This Aliivibrio salmonicida (strain LFI1238) (Vibrio salmonicida (strain LFI1238)) protein is DNA ligase.